The primary structure comprises 391 residues: Phosphoglycerate kinase (391 aa).

Substrate contacts are provided by residues 21–23 (DFN), Arg-36, 59–62 (HLGR), Arg-113, and Arg-146. ATP contacts are provided by residues Lys-197, Glu-319, and 345–348 (GGDT).

This sequence belongs to the phosphoglycerate kinase family. In terms of assembly, monomer.

The protein localises to the cytoplasm. The catalysed reaction is (2R)-3-phosphoglycerate + ATP = (2R)-3-phospho-glyceroyl phosphate + ADP. The protein operates within carbohydrate degradation; glycolysis; pyruvate from D-glyceraldehyde 3-phosphate: step 2/5. This is Phosphoglycerate kinase from Methylococcus capsulatus (strain ATCC 33009 / NCIMB 11132 / Bath).